We begin with the raw amino-acid sequence, 132 residues long: Small ribosomal subunit protein uS8 (132 aa).

This sequence belongs to the universal ribosomal protein uS8 family. In terms of assembly, part of the 30S ribosomal subunit. Contacts proteins S5 and S12.

In terms of biological role, one of the primary rRNA binding proteins, it binds directly to 16S rRNA central domain where it helps coordinate assembly of the platform of the 30S subunit. The chain is Small ribosomal subunit protein uS8 from Streptomyces griseus subsp. griseus (strain JCM 4626 / CBS 651.72 / NBRC 13350 / KCC S-0626 / ISP 5235).